We begin with the raw amino-acid sequence, 74 residues long: Large ribosomal subunit protein bL31 (74 aa).

Residues cysteine 16, cysteine 18, cysteine 37, and cysteine 40 each contribute to the Zn(2+) site.

The protein belongs to the bacterial ribosomal protein bL31 family. Type A subfamily. In terms of assembly, part of the 50S ribosomal subunit. The cofactor is Zn(2+).

In terms of biological role, binds the 23S rRNA. The sequence is that of Large ribosomal subunit protein bL31 from Nitrosomonas europaea (strain ATCC 19718 / CIP 103999 / KCTC 2705 / NBRC 14298).